Consider the following 318-residue polypeptide: Taste receptor type 2 member 60 (318 aa).

Residues 1 to 7 (MNGDHMV) lie on the Extracellular side of the membrane. A helical transmembrane segment spans residues 8–28 (LGSSVTDKKAIILVTILLLLR). Topologically, residues 29–40 (LVAIAGNGFITA) are cytoplasmic. The chain crosses the membrane as a helical span at residues 41–61 (ALGVEWVLRRMLLPCDKLLVS). The Extracellular portion of the chain corresponds to 62–88 (LGASHFCLQSVVMGKTIYVFLYPMAFP). A helical membrane pass occupies residues 89-109 (YNPVLQFLAFQWDFLNAATLW). The Cytoplasmic segment spans residues 110–128 (FSTWLSVFYCVKIATFTHP). Residues 129-149 (VFFWLKHKLSGWLPWMVFSYV) traverse the membrane as a helical segment. Residues 150 to 183 (GLSSFTTILFFIGNHRMYQNYLKNHLQPWNVTGN) are Extracellular-facing. Asn179 carries N-linked (GlcNAc...) asparagine glycosylation. Residues 184–204 (SIRSYCEKFYLFPLKMITWTM) traverse the membrane as a helical segment. At 205–234 (PTAVFFICMILLITSLGRHMKKALLTTSGF) the chain is on the cytoplasmic side. Residues 235–255 (REPSVQAHIKALLALLSFAML) form a helical membrane-spanning segment. The Extracellular portion of the chain corresponds to 256 to 264 (FISYFLSLV). A helical transmembrane segment spans residues 265–285 (FSAAGIFPPLDFKFWVWESVI). Over 286–318 (YLCAAVHPIILLFSNCRLRAVLKSRRSSRCGTP) the chain is Cytoplasmic.

It belongs to the G-protein coupled receptor T2R family.

The protein resides in the membrane. Receptor that may play a role in the perception of bitterness and is gustducin-linked. May play a role in sensing the chemical composition of the gastrointestinal content. The activity of this receptor may stimulate alpha gustducin, mediate PLC-beta-2 activation and lead to the gating of TRPM5. The sequence is that of Taste receptor type 2 member 60 (TAS2R60) from Pan troglodytes (Chimpanzee).